The chain runs to 577 residues: MKKRVAGWYRRMKIKDKLFVFLSLIMAVSFLFVYSGVQYAFHVYDEQIYRKSSEVLRMSSERIEDELKKIEDVSYEIITDEQIQRILSMQNRDDTYDQYQMKQELWDQLAGYASDEKYIDSIHVIDARGSEYSAGSSSSDLLQQEQEEVFKRAKAKSGRNLWMTLGGSDPVLISARQIRSYHQLSLNGLGMVLIQVNVKQMIRDVPKDWGDSVGDIMIADQGGNLVYTAHASAHVPEAAKETLKHPGYDLIKKNGKRYFISYLQSSYQNWSYYNVIPFDQMFAKISFMKTVIGTCFLLFFCVVLLFGRKIANSITEPIEQLVTAMKSVQHSGIEAGVSLSLPEHTQDEAGMLNRHFTVMMKRINELMEENVEKQLIIKETELKALQAQINPHFLYNTLESINWLAKANQQKQISKMVESLGFLLRNSIHMKKDIVTIQEEADIVRHYMTIQRFRFEERLKFTLDIDDEVKHCLIPKLTLQPLAENAIQYALEPFTRPCAIRIQAKKAKGCVCITVEDNGPGMDGRILESTGGRGIGLWNIRERISLTFGEPYGLRIHSEHEKGTRIVITIPCRNEVV.

The Cytoplasmic segment spans residues 1–17; that stretch reads MKKRVAGWYRRMKIKDK. Residues 18–38 traverse the membrane as a helical segment; that stretch reads LFVFLSLIMAVSFLFVYSGVQ. At 39-286 the chain is on the extracellular side; that stretch reads YAFHVYDEQI…PFDQMFAKIS (248 aa). Residues 287–307 traverse the membrane as a helical segment; it reads FMKTVIGTCFLLFFCVVLLFG. The Cytoplasmic portion of the chain corresponds to 308-577; that stretch reads RKIANSITEP…ITIPCRNEVV (270 aa). The 57-residue stretch at 312-368 folds into the HAMP domain; it reads NSITEPIEQLVTAMKSVQHSGIEAGVSLSLPEHTQDEAGMLNRHFTVMMKRINELME. Positions 365–574 constitute a Histidine kinase domain; that stretch reads ELMEENVEKQ…RIVITIPCRN (210 aa). Position 392 is a phosphohistidine; by autocatalysis (His392).

The protein resides in the cell membrane. The enzyme catalyses ATP + protein L-histidine = ADP + protein N-phospho-L-histidine.. Functionally, member of the two-component regulatory system YesM/YesN. Probably activates YesN by phosphorylation. The chain is Sensor histidine kinase YesM (yesM) from Bacillus subtilis (strain 168).